We begin with the raw amino-acid sequence, 201 residues long: Casparian strip membrane protein 7 (201 aa).

The span at 1 to 11 (MEAGEEIEDGE) shows a compositional bias: acidic residues. Residues 1–26 (MEAGEEIEDGEPSTPTYKAHHPPPHL) form a disordered region. Residues 1 to 34 (MEAGEEIEDGEPSTPTYKAHHPPPHLPPPMRSSG) lie on the Cytoplasmic side of the membrane. A helical membrane pass occupies residues 35 to 55 (VSLVLSVADLVLRFVAIGGTA). Topologically, residues 56–86 (GSAIAMATTSETLPFAAPFVRFRAEYSDLPT) are extracellular. The chain crosses the membrane as a helical span at residues 87–107 (LMFFVVASSVVCAYLVLSLPA). Residues 108-128 (SVVHVVRPGARSSRAILAFLD) are Cytoplasmic-facing. A helical transmembrane segment spans residues 129–149 (TVMLALLTASASAAAAIVYLA). The Extracellular portion of the chain corresponds to 150–171 (HRGSARANWLGICQQFTSFCQR). The chain crosses the membrane as a helical span at residues 172–192 (ITASLVGSFAAAVVLVALVFL). Residues 193 to 201 (SALSLARRA) are Cytoplasmic-facing.

It belongs to the Casparian strip membrane proteins (CASP) family. As to quaternary structure, homodimer and heterodimers.

The protein resides in the cell membrane. Its function is as follows. Regulates membrane-cell wall junctions and localized cell wall deposition. Required for establishment of the Casparian strip membrane domain (CSD) and the subsequent formation of Casparian strips, a cell wall modification of the root endodermis that determines an apoplastic barrier between the intraorganismal apoplasm and the extraorganismal apoplasm and prevents lateral diffusion. This chain is Casparian strip membrane protein 7, found in Oryza sativa subsp. japonica (Rice).